Reading from the N-terminus, the 365-residue chain is Class I histocompatibility antigen, Gogo-A*0201 alpha chain (365 aa).

A signal peptide spans 1–24; sequence MAVMAPRTLLLLLLGALALTQTWA. An alpha-1 region spans residues 25-114; sequence GSHSMRYFST…LRGYYNQSEA (90 aa). At 25–308 the chain is on the extracellular side; it reads GSHSMRYFST…EPSSQPTIPI (284 aa). The N-linked (GlcNAc...) asparagine glycan is linked to Asn110. Positions 115–206 are alpha-2; the sequence is GSHTIQKMYG…ENGKETLQRT (92 aa). Disulfide bonds link Cys125-Cys188 and Cys227-Cys283. Positions 207-298 are alpha-3; sequence DAPKTHMTHH…SLPKPLTLRW (92 aa). Residues 209 to 295 form the Ig-like C1-type domain; sequence PKTHMTHHAV…QHESLPKPLT (87 aa). A connecting peptide region spans residues 299–308; the sequence is EPSSQPTIPI. Residues 309-332 form a helical membrane-spanning segment; that stretch reads VGIIAGLVLFGAVIAGAVIAAVRW. At 333-365 the chain is on the cytoplasmic side; it reads RRKSSDRKGGSYSQAASSDSAQGSDVSLTACKV. The tract at residues 338 to 365 is disordered; it reads DRKGGSYSQAASSDSAQGSDVSLTACKV. A compositionally biased stretch (low complexity) spans 342 to 359; it reads GSYSQAASSDSAQGSDVS. Residue Ser343 is modified to Phosphoserine. Phosphotyrosine is present on Tyr344. Residues Ser345, Ser349, Ser350, Ser352, Ser356, and Ser359 each carry the phosphoserine modification.

The protein belongs to the MHC class I family. In terms of assembly, heterodimer of an alpha chain and a beta chain (beta-2-microglobulin).

It localises to the membrane. In terms of biological role, involved in the presentation of foreign antigens to the immune system. This chain is Class I histocompatibility antigen, Gogo-A*0201 alpha chain, found in Gorilla gorilla gorilla (Western lowland gorilla).